The primary structure comprises 510 residues: Peptide transporter imqJ (510 aa).

3 consecutive transmembrane segments (helical) span residues 1 to 21 (MVNQ…AVVA), 31 to 51 (IIFS…SSLP), and 57 to 77 (GISL…TGGI). A glycan (N-linked (GlcNAc...) asparagine) is linked at Asn-80. Helical transmembrane passes span 116-136 (IFTT…LITI), 143-163 (FSAA…IVLV), 231-251 (IFIL…NFIS), and 269-289 (IDPI…FPFL). One can recognise a Fe2OG dioxygenase domain in the interval 348 to 468 (PAASEIRLLY…RCSSVFFFKA (121 aa)). His-377 and Asp-379 together coordinate Fe cation. Asn-421 carries an N-linked (GlcNAc...) asparagine glycan. His-439 lines the Fe cation pocket. Arg-459 contributes to the 2-oxoglutarate binding site.

The protein belongs to the major facilitator superfamily. Proton-dependent oligopeptide transporter (POT/PTR) (TC 2.A.17) family.

The protein localises to the membrane. Its function is as follows. Peptide transporter; part of the gene cluster that mediates the biosynthesis of imizoquins A to D, tripeptide-derived alkaloids that serve a protective role against oxidative stress that are essential for normal germination. In Aspergillus flavus (strain ATCC 200026 / FGSC A1120 / IAM 13836 / NRRL 3357 / JCM 12722 / SRRC 167), this protein is Peptide transporter imqJ.